The chain runs to 82 residues: Sulfur carrier protein TusA (82 aa).

Cys-19 acts as the Cysteine persulfide intermediate in catalysis.

The protein belongs to the sulfur carrier protein TusA family.

It localises to the cytoplasm. Its function is as follows. Sulfur carrier protein which probably makes part of a sulfur-relay system. The protein is Sulfur carrier protein TusA of Vibrio cholerae serotype O1 (strain ATCC 39541 / Classical Ogawa 395 / O395).